A 449-amino-acid chain; its full sequence is 23S rRNA (uracil(1939)-C(5))-methyltransferase RlmD (449 aa).

Residues 1–66 form the TRAM domain; sequence MGRSRYHNKL…AKFDEAKVVE (66 aa). Residues Cys79, Cys85, Cys88, and Cys169 each coordinate [4Fe-4S] cluster. Positions 280, 309, 314, 330, 357, and 379 each coordinate S-adenosyl-L-methionine. The active-site Nucleophile is Cys405.

The protein belongs to the class I-like SAM-binding methyltransferase superfamily. RNA M5U methyltransferase family. RlmD subfamily.

It carries out the reaction uridine(1939) in 23S rRNA + S-adenosyl-L-methionine = 5-methyluridine(1939) in 23S rRNA + S-adenosyl-L-homocysteine + H(+). Its function is as follows. Catalyzes the formation of 5-methyl-uridine at position 1939 (m5U1939) in 23S rRNA. This is 23S rRNA (uracil(1939)-C(5))-methyltransferase RlmD from Francisella tularensis subsp. holarctica (strain LVS).